The chain runs to 702 residues: Ribosomal RNA large subunit methyltransferase K/L (702 aa).

The region spanning 43 to 154 (LVYQSLMWSR…KETASIALDL (112 aa)) is the THUMP domain.

This sequence belongs to the methyltransferase superfamily. RlmKL family.

It is found in the cytoplasm. It carries out the reaction guanosine(2445) in 23S rRNA + S-adenosyl-L-methionine = N(2)-methylguanosine(2445) in 23S rRNA + S-adenosyl-L-homocysteine + H(+). The enzyme catalyses guanosine(2069) in 23S rRNA + S-adenosyl-L-methionine = N(2)-methylguanosine(2069) in 23S rRNA + S-adenosyl-L-homocysteine + H(+). Specifically methylates the guanine in position 2445 (m2G2445) and the guanine in position 2069 (m7G2069) of 23S rRNA. In Escherichia coli O6:H1 (strain CFT073 / ATCC 700928 / UPEC), this protein is Ribosomal RNA large subunit methyltransferase K/L.